The chain runs to 1162 residues: Protein OBERON 4 (1162 aa).

Composition is skewed to basic and acidic residues over residues 1 to 19, 61 to 77, 90 to 99, and 118 to 134; these read MKRL…KNVD, NRDL…HRSE, FRSERERPNR, and VDDR…DRSL. Disordered regions lie at residues 1 to 235, 251 to 307, 321 to 346, and 441 to 485; these read MKRL…PSCS, IGKS…VSQN, DHRD…DKDE, and SKTE…QSGV. Over residues 135–146 the composition is skewed to polar residues; that stretch reads KSPSWSRDSPNE. The span at 148-157 shows a compositional bias: basic and acidic residues; the sequence is SKFKPLDSRN. Polar residues predominate over residues 163-182; it reads KSLASPTWSKDSGSEQSKSV. Acidic residues predominate over residues 203-213; it reads EMEEGELEPEP. 4 stretches are compositionally biased toward basic and acidic residues: residues 225–235, 263–300, 336–346, and 441–457; these read TKHDCKLPSCS, SNRE…HATE, DTVDEKGDKDE, and SKTE…KDDN. A PHD-type zinc finger spans residues 835 to 899; that stretch reads ACMCLVCSNF…QFHCVACNHP (65 aa). Residues 1065–1161 are a coiled coil; it reads MKQAEAEMFQ…KMEMTKQSLA (97 aa).

As to quaternary structure, self-interacts. Interacts with OBE1 and OBE2. Interacts with OBE3.

Its subcellular location is the nucleus. Functionally, probable transcription factor that functions redundantly with OBE3 in specification of the hypophysis and establishment of the embryonic root. Involved in the activation of ARF5/MP-dependent gene expression during embryonic root meristem initiation. Involved in shoot meristem homeostasis. In Arabidopsis thaliana (Mouse-ear cress), this protein is Protein OBERON 4.